Reading from the N-terminus, the 70-residue chain is METQKEIVFIAVESEDGGYIEKTERYSIFTQGDTWEELLEMIKDAVKCHFDEGAPKYVHARFVKDVTIAV.

Belongs to the UPF0150 family.

This chain is UPF0150 protein TM_1311, found in Thermotoga maritima (strain ATCC 43589 / DSM 3109 / JCM 10099 / NBRC 100826 / MSB8).